We begin with the raw amino-acid sequence, 105 residues long: Large ribosomal subunit protein bL21 (105 aa).

Belongs to the bacterial ribosomal protein bL21 family. As to quaternary structure, part of the 50S ribosomal subunit. Contacts protein L20.

This protein binds to 23S rRNA in the presence of protein L20. The protein is Large ribosomal subunit protein bL21 of Treponema pallidum (strain Nichols).